Consider the following 511-residue polypeptide: Intermediate cleaving peptidase 55 (511 aa).

Asp327, Asp338, His417, Glu444, and Glu467 together coordinate Mn(2+).

This sequence belongs to the peptidase M24B family. It depends on Mn(2+) as a cofactor.

The protein resides in the nucleus. It localises to the mitochondrion inner membrane. It catalyses the reaction The enzyme cleaves the 36-Pro-Pro-37 bond of cysteine desulfurase (EC 2.8.1.7) removing three amino acid residues (Tyr-Ser-Pro) from the N-terminus after cleavage by mitochondrial processing peptidase.. Its function is as follows. Aminopeptidase which cleaves preprotein intermediates that carry destabilizing N-ter amino acid residues after the mitochondrial processing peptidase (MPP) cleavage site and is thus critical for stabilization of the mitochondrial proteome. The chain is Intermediate cleaving peptidase 55 (ICP55) from Saccharomyces cerevisiae (strain ATCC 204508 / S288c) (Baker's yeast).